A 128-amino-acid polypeptide reads, in one-letter code: Ribosome-binding factor A (128 aa).

This sequence belongs to the RbfA family. Monomer. Binds 30S ribosomal subunits, but not 50S ribosomal subunits or 70S ribosomes.

It localises to the cytoplasm. Its function is as follows. One of several proteins that assist in the late maturation steps of the functional core of the 30S ribosomal subunit. Associates with free 30S ribosomal subunits (but not with 30S subunits that are part of 70S ribosomes or polysomes). Required for efficient processing of 16S rRNA. May interact with the 5'-terminal helix region of 16S rRNA. The polypeptide is Ribosome-binding factor A (Acidithiobacillus ferrooxidans (strain ATCC 23270 / DSM 14882 / CIP 104768 / NCIMB 8455) (Ferrobacillus ferrooxidans (strain ATCC 23270))).